We begin with the raw amino-acid sequence, 813 residues long: Envelope glycoprotein H (813 aa).

The first 18 residues, 1 to 18, serve as a signal peptide directing secretion; that stretch reads MGLPGSIVFLIMIHAFCA. Residues 19-769 lie on the Virion surface side of the membrane; sequence KKTPTNTLPS…ESERVTIISA (751 aa). Asn-62 and Asn-116 each carry an N-linked (GlcNAc...) asparagine; by host glycan. A disordered region spans residues 135–159; sequence DRSGLKLDDKDDAQPTGTNPPTELK. A compositionally biased stretch (basic and acidic residues) spans 137–147; that stretch reads SGLKLDDKDDA. The interval 212 to 273 is interaction with gL; the sequence is DGAEVIMKIG…FTRRPYLIYL (62 aa). Residues Asn-247, Asn-279, Asn-410, Asn-434, Asn-469, Asn-576, Asn-727, and Asn-750 are each glycosylated (N-linked (GlcNAc...) asparagine; by host). The helical transmembrane segment at 770-790 threads the bilayer; that stretch reads TYVATATAGASIAISIAIITV. Topologically, residues 791 to 813 are intravirion; the sequence is RMIINNFRYNYHRYKKLSLYDDL.

This sequence belongs to the herpesviridae glycoprotein H family. In terms of assembly, interacts with glycoprotein L (gL); this interaction is necessary for the correct processing and cell surface expression of gH. The heterodimer gH/gL seems to interact with gB trimers during fusion. In terms of processing, N-glycosylated, O-glycosylated, and sialylated.

It is found in the virion membrane. The protein resides in the host cell membrane. It localises to the host endosome membrane. In terms of biological role, the heterodimer glycoprotein H-glycoprotein L is required for the fusion of viral and plasma membranes leading to virus entry into the host cell. Following initial binding to host receptor, membrane fusion is mediated by the fusion machinery composed of gB and the heterodimer gH/gL. May also be involved in the fusion between the virion envelope and the outer nuclear membrane during virion morphogenesis. The polypeptide is Envelope glycoprotein H (Gallus gallus (Chicken)).